The following is a 207-amino-acid chain: MPNTNPVAAWKALKEGNERFVAGRPQHPSQSVDHRAGLAAGQKPTAVIFGCADSRVAAEIIFDQGLGDMFVVRTAGHVIDSAVLGSIEYAVTVLNVPLIVVLGHDSCGAVNAALAAINDGTLPGGYVRDVVERVAPSVLLGRRDGLSRVDEFEQRHVHETVAILMARSSAISERIAGGSLAIVGVTYQLDDGRAVLRDHIGNIGEEV.

Zn(2+) contacts are provided by Cys51, Asp53, His104, and Cys107.

It belongs to the beta-class carbonic anhydrase family. The cofactor is Zn(2+).

The catalysed reaction is hydrogencarbonate + H(+) = CO2 + H2O. Its function is as follows. Catalyzes the reversible hydration of carbon dioxide to form bicarbonate. This Mycobacterium tuberculosis (strain CDC 1551 / Oshkosh) protein is Carbonic anhydrase 2 (mtcA2).